The following is a 203-amino-acid chain: Ras-related protein Rab-8B (203 aa).

Residues 22 to 29 (GDSGVGKS), 70 to 74 (DTAGQ), and 128 to 131 (NKCD) contribute to the GTP site. Residues cysteine 202 and cysteine 203 are each lipidated (S-geranylgeranyl cysteine).

This sequence belongs to the small GTPase superfamily. Rab family.

It is found in the cell membrane. Protein transport. Probably involved in vesicular traffic. The chain is Ras-related protein Rab-8B (rab8B) from Dictyostelium discoideum (Social amoeba).